Consider the following 363-residue polypeptide: Capsid protein (363 aa).

Residues 72–111 (KKVEELNESLKAAILAGAEAEDLRNKLKDISQRYASQLEI) are a coiled coil. Positions 122–144 (LKKKGHEQPLTGSGSSEPVHAES) are disordered.

Its subcellular location is the virion. This Citrus leaf blotch virus (isolate Nagami kumquat/France/SRA-153/1984) (CLBV) protein is Capsid protein.